Consider the following 311-residue polypeptide: p-hydroxybenzoic acid efflux pump subunit AaeA (311 aa).

A helical membrane pass occupies residues 11–31 (VGITVLVVVLAVIAIFNVWAF).

It belongs to the membrane fusion protein (MFP) (TC 8.A.1) family.

It localises to the cell inner membrane. Functionally, forms an efflux pump with AaeB. This is p-hydroxybenzoic acid efflux pump subunit AaeA from Yersinia pseudotuberculosis serotype O:3 (strain YPIII).